The primary structure comprises 1080 residues: Origin recognition complex subunit 3 (1080 aa).

Disordered regions lie at residues 92-112 (YGIS…DDSS), 566-701 (TIKL…PKRI), and 869-902 (IKNE…ENEQ). Residues 651–661 (IKSDLECNDND) are compositionally biased toward basic and acidic residues. The span at 662 to 671 (KDNDDNDNDI) shows a compositional bias: acidic residues. Composition is skewed to low complexity over residues 672 to 688 (NENN…NSNN) and 875 to 896 (QQQQ…QQQQ).

Belongs to the ORC3 family. In terms of assembly, ORC is composed of six subunits.

It localises to the nucleus. In terms of biological role, component of the origin recognition complex (ORC) that binds origins of replication. DNA-binding is ATP-dependent, however specific DNA sequences that define origins of replication have not been identified so far. ORC is required to assemble the pre-replication complex necessary to initiate DNA replication. This chain is Origin recognition complex subunit 3 (orcC), found in Dictyostelium discoideum (Social amoeba).